A 379-amino-acid polypeptide reads, in one-letter code: UDP-N-acetylglucosamine--N-acetylmuramyl-(pentapeptide) pyrophosphoryl-undecaprenol N-acetylglucosamine transferase (379 aa).

Residues 10–12 (TAG), Asn124, Arg161, Ser195, and Gln291 contribute to the UDP-N-acetyl-alpha-D-glucosamine site.

This sequence belongs to the glycosyltransferase 28 family. MurG subfamily.

Its subcellular location is the cell membrane. It catalyses the reaction di-trans,octa-cis-undecaprenyl diphospho-N-acetyl-alpha-D-muramoyl-L-alanyl-D-glutamyl-meso-2,6-diaminopimeloyl-D-alanyl-D-alanine + UDP-N-acetyl-alpha-D-glucosamine = di-trans,octa-cis-undecaprenyl diphospho-[N-acetyl-alpha-D-glucosaminyl-(1-&gt;4)]-N-acetyl-alpha-D-muramoyl-L-alanyl-D-glutamyl-meso-2,6-diaminopimeloyl-D-alanyl-D-alanine + UDP + H(+). It functions in the pathway cell wall biogenesis; peptidoglycan biosynthesis. Functionally, cell wall formation. Catalyzes the transfer of a GlcNAc subunit on undecaprenyl-pyrophosphoryl-MurNAc-pentapeptide (lipid intermediate I) to form undecaprenyl-pyrophosphoryl-MurNAc-(pentapeptide)GlcNAc (lipid intermediate II). In Thermobifida fusca (strain YX), this protein is UDP-N-acetylglucosamine--N-acetylmuramyl-(pentapeptide) pyrophosphoryl-undecaprenol N-acetylglucosamine transferase.